The following is a 296-amino-acid chain: 4-hydroxybenzoate octaprenyltransferase (296 aa).

8 consecutive transmembrane segments (helical) span residues 29–49 (IGIY…ADGV), 55–75 (LLIF…INDF), 102–122 (AWIT…LTNA), 146–166 (YYPQ…AFTA), 169–189 (GELP…TVAY), 219–239 (LIIG…GSRF), 241–261 (LGLY…WEAW), and 275–295 (FLHN…DYAL).

Belongs to the UbiA prenyltransferase family. It depends on Mg(2+) as a cofactor.

Its subcellular location is the cell inner membrane. The enzyme catalyses all-trans-octaprenyl diphosphate + 4-hydroxybenzoate = 4-hydroxy-3-(all-trans-octaprenyl)benzoate + diphosphate. Its pathway is cofactor biosynthesis; ubiquinone biosynthesis. Its function is as follows. Catalyzes the prenylation of para-hydroxybenzoate (PHB) with an all-trans polyprenyl group. Mediates the second step in the final reaction sequence of ubiquinone-8 (UQ-8) biosynthesis, which is the condensation of the polyisoprenoid side chain with PHB, generating the first membrane-bound Q intermediate 3-octaprenyl-4-hydroxybenzoate. This is 4-hydroxybenzoate octaprenyltransferase from Pseudomonas aeruginosa (strain UCBPP-PA14).